We begin with the raw amino-acid sequence, 2184 residues long: Genome polyprotein (2184 aa).

G2 carries the N-myristoyl glycine; by host lipid modification. Over G2–Q1494 the chain is Cytoplasmic. The segment at F566 to V582 is amphipathic alpha-helix. Active-site for protease 2A activity residues include H871 and D889. 2 residues coordinate Zn(2+): C906 and C908. C960 (for protease 2A activity) is an active-site residue. Residues C966 and H968 each contribute to the Zn(2+) site. The interval S1100–Q1172 is membrane-binding. The tract at residues S1100–T1238 is oligomerization. The interval A1121–Q1125 is RNA-binding. Residues E1204–N1360 form the SF3 helicase domain. Residues C1368, C1380, and C1385 each contribute to the Zn(2+) site. The segment at C1368–C1385 adopts a C4-type; degenerate zinc-finger fold. Residues E1412–V1419 form an RNA-binding region. An oligomerization region spans residues L1423–Q1428. An intramembrane segment occupies A1495 to Y1510. Over K1511–F2184 the chain is Cytoplasmic. O-(5'-phospho-RNA)-tyrosine is present on Y1520. The Peptidase C3 domain maps to G1540–F1718. Catalysis depends on for protease 3C activity residues H1579, E1610, and C1686. The RdRp catalytic domain occupies G1949–L2065. Mg(2+) is bound by residues D1955 and D2051.

Belongs to the picornaviruses polyprotein family. Interacts with capsid protein VP1 and capsid protein VP3 to form heterotrimeric protomers. As to quaternary structure, interacts with capsid protein VP0, and capsid protein VP3 to form heterotrimeric protomers. Five protomers subsequently associate to form pentamers which serve as building blocks for the capsid. Interacts with capsid protein VP2, capsid protein VP3 and capsid protein VP4 following cleavage of capsid protein VP0. Interacts with host CXADR. In terms of assembly, interacts with capsid protein VP1 and capsid protein VP3 in the mature capsid. Interacts with capsid protein VP0 and capsid protein VP1 to form heterotrimeric protomers. Five protomers subsequently associate to form pentamers which serve as building blocks for the capsid. Interacts with capsid protein VP4 in the mature capsid. Interacts with protein 2C; this interaction may be important for virion morphogenesis. As to quaternary structure, interacts with capsid protein VP1 and capsid protein VP3. In terms of assembly, homodimer. Homohexamer; forms a hexameric ring structure with 6-fold symmetry characteristic of AAA+ ATPases. Interacts (via N-terminus) with host RTN3 (via reticulon domain); this interaction is important for viral replication. Interacts with capsid protein VP3; this interaction may be important for virion morphogenesis. As to quaternary structure, interacts with protein 3CD. In terms of assembly, homodimer. Interacts with host GBF1. Interacts (via GOLD domain) with host ACBD3 (via GOLD domain); this interaction allows the formation of a viral protein 3A/ACBD3 heterotetramer with a 2:2 stoichiometry, which will stimulate the recruitment of host PI4KB in order to synthesize PI4P at the viral RNA replication sites. Interacts with RNA-directed RNA polymerase. As to quaternary structure, interacts with protein 3AB and with RNA-directed RNA polymerase. In terms of assembly, interacts with Viral protein genome-linked and with protein 3CD. Mg(2+) is required as a cofactor. In terms of processing, specific enzymatic cleavages in vivo by the viral proteases yield processing intermediates and the mature proteins. Post-translationally, myristoylation is required for the formation of pentamers during virus assembly. Further assembly of 12 pentamers and a molecule of genomic RNA generates the provirion. During virion maturation, immature virions are rendered infectious following cleavage of VP0 into VP4 and VP2. This maturation seems to be an autocatalytic event triggered by the presence of RNA in the capsid and it is followed by a conformational change infectious virion. In terms of processing, myristoylation is required during RNA encapsidation and formation of the mature virus particle. Post-translationally, VPg is uridylylated by the polymerase into VPg-pUpU. This acts as a nucleotide-peptide primer for the genomic RNA replication.

The protein localises to the virion. It is found in the host cytoplasm. The protein resides in the host cytoplasmic vesicle membrane. It localises to the host nucleus. The enzyme catalyses a ribonucleoside 5'-triphosphate + H2O = a ribonucleoside 5'-diphosphate + phosphate + H(+). It catalyses the reaction Selective cleavage of Tyr-|-Gly bond in the picornavirus polyprotein.. The catalysed reaction is RNA(n) + a ribonucleoside 5'-triphosphate = RNA(n+1) + diphosphate. It carries out the reaction Selective cleavage of Gln-|-Gly bond in the poliovirus polyprotein. In other picornavirus reactions Glu may be substituted for Gln, and Ser or Thr for Gly.. Replication or transcription is subject to high level of random mutations by the nucleotide analog ribavirin. Functionally, forms an icosahedral capsid of pseudo T=3 symmetry with capsid proteins VP2 and VP3. The capsid is 300 Angstroms in diameter, composed of 60 copies of each capsid protein and enclosing the viral positive strand RNA genome. Capsid protein VP1 mainly forms the vertices of the capsid. Capsid protein VP1 interacts with host CXADR to provide virion attachment to target host cells. This attachment induces virion internalization. Tyrosine kinases are probably involved in the entry process. After binding to its receptor, the capsid undergoes conformational changes. Capsid protein VP1 N-terminus (that contains an amphipathic alpha-helix) and capsid protein VP4 are externalized. Together, they shape a pore in the host membrane through which viral genome is translocated to host cell cytoplasm. Its function is as follows. Forms an icosahedral capsid of pseudo T=3 symmetry with capsid proteins VP2 and VP3. The capsid is 300 Angstroms in diameter, composed of 60 copies of each capsid protein and enclosing the viral positive strand RNA genome. In terms of biological role, lies on the inner surface of the capsid shell. After binding to the host receptor, the capsid undergoes conformational changes. Capsid protein VP4 is released, Capsid protein VP1 N-terminus is externalized, and together, they shape a pore in the host membrane through which the viral genome is translocated into the host cell cytoplasm. Component of immature procapsids, which is cleaved into capsid proteins VP4 and VP2 after maturation. Allows the capsid to remain inactive before the maturation step. Functionally, cysteine protease that cleaves viral polyprotein and specific host proteins. It is responsible for the autocatalytic cleavage between the P1 and P2 regions, which is the first cleavage occurring in the polyprotein. Also cleaves the host translation initiation factor EIF4G1, in order to shut down the capped cellular mRNA translation. Inhibits the host nucleus-cytoplasm protein and RNA trafficking by cleaving host members of the nuclear pores. Counteracts stress granule formation probably by antagonizing its assembly or promoting its dissassembly. Cleaves and inhibits host IFIH1/MDA5, thereby inhibiting the type-I IFN production and the establishment of the antiviral state. Cleaves and inhibits host MAVS, thereby inhibiting the type-I IFN production and the establishment of the antiviral state. Its function is as follows. Plays an essential role in the virus replication cycle by acting as a viroporin. Creates a pore in the host endoplasmic reticulum and as a consequence releases Ca2+ in the cytoplasm of infected cell. In turn, high levels of cytoplasmic calcium may trigger membrane trafficking and transport of viral ER-associated proteins to viroplasms, sites of viral genome replication. In terms of biological role, induces and associates with structural rearrangements of intracellular membranes. Displays RNA-binding, nucleotide binding and NTPase activities. May play a role in virion morphogenesis and viral RNA encapsidation by interacting with the capsid protein VP3. Localizes the viral replication complex to the surface of membranous vesicles. Together with protein 3CD binds the Cis-Active RNA Element (CRE) which is involved in RNA synthesis initiation. Acts as a cofactor to stimulate the activity of 3D polymerase, maybe through a nucleid acid chaperone activity. Functionally, localizes the viral replication complex to the surface of membranous vesicles. It inhibits host cell endoplasmic reticulum-to-Golgi apparatus transport and causes the disassembly of the Golgi complex, possibly through GBF1 interaction. This would result in depletion of MHC, trail receptors and IFN receptors at the host cell surface. Plays an essential role in viral RNA replication by recruiting ACBD3 and PI4KB at the viral replication sites, thereby allowing the formation of the rearranged membranous structures where viral replication takes place. Its function is as follows. Acts as a primer for viral RNA replication and remains covalently bound to viral genomic RNA. VPg is uridylylated prior to priming replication into VPg-pUpU. The oriI viral genomic sequence may act as a template for this. The VPg-pUpU is then used as primer on the genomic RNA poly(A) by the RNA-dependent RNA polymerase to replicate the viral genome. During genome replication, the VPg-RNA linkage is removed by the host TDP2, thereby accelerating replication. During the late stage of the replication cycle, host TDP2 is excluded from sites of viral RNA synthesis and encapsidation, allowing for the generation of progeny virions. In terms of biological role, involved in the viral replication complex and viral polypeptide maturation. It exhibits protease activity with a specificity and catalytic efficiency that is different from protease 3C. Protein 3CD lacks polymerase activity. Protein 3CD binds to the 5'UTR of the viral genome. Replicates the viral genomic RNA on the surface of intracellular membranes. May form linear arrays of subunits that propagate along a strong head-to-tail interaction called interface-I. Covalently attaches UMP to a tyrosine of VPg, which is used to prime RNA synthesis. The positive stranded RNA genome is first replicated at virus induced membranous vesicles, creating a dsRNA genomic replication form. This dsRNA is then used as template to synthesize positive stranded RNA genomes. ss(+)RNA genomes are either translated, replicated or encapsidated. Functionally, major viral protease that mediates proteolytic processing of the polyprotein. Cleaves host EIF5B, contributing to host translation shutoff. Also cleaves host PABPC1, contributing to host translation shutoff. Cleaves host NLRP1, triggers host N-glycine-mediated degradation of the autoinhibitory NLRP1 N-terminal fragment. The sequence is that of Genome polyprotein from Coxsackievirus B6 (strain Schmitt).